Reading from the N-terminus, the 334-residue chain is GTP 3',8-cyclase (334 aa).

One can recognise a Radical SAM core domain in the interval 13–239 (RFHRKFYYLR…KVKAANDGPA (227 aa)). Arginine 22 is a GTP binding site. Cysteine 29 and cysteine 33 together coordinate [4Fe-4S] cluster. Residue tyrosine 35 participates in S-adenosyl-L-methionine binding. Cysteine 36 is a binding site for [4Fe-4S] cluster. Arginine 73 is a GTP binding site. Glycine 77 is a binding site for S-adenosyl-L-methionine. Position 104 (threonine 104) interacts with GTP. Serine 128 contributes to the S-adenosyl-L-methionine binding site. Position 165 (lysine 165) interacts with GTP. Methionine 199 serves as a coordination point for S-adenosyl-L-methionine. Cysteine 262 and cysteine 265 together coordinate [4Fe-4S] cluster. Residue 267 to 269 (RLR) participates in GTP binding. [4Fe-4S] cluster is bound at residue cysteine 279.

The protein belongs to the radical SAM superfamily. MoaA family. Monomer and homodimer. Requires [4Fe-4S] cluster as cofactor.

It catalyses the reaction GTP + AH2 + S-adenosyl-L-methionine = (8S)-3',8-cyclo-7,8-dihydroguanosine 5'-triphosphate + 5'-deoxyadenosine + L-methionine + A + H(+). Its pathway is cofactor biosynthesis; molybdopterin biosynthesis. Its function is as follows. Catalyzes the cyclization of GTP to (8S)-3',8-cyclo-7,8-dihydroguanosine 5'-triphosphate. The sequence is that of GTP 3',8-cyclase from Vibrio vulnificus (strain CMCP6).